The chain runs to 161 residues: Large ribosomal subunit protein uL10 (161 aa).

Belongs to the universal ribosomal protein uL10 family. In terms of assembly, part of the ribosomal stalk of the 50S ribosomal subunit. The N-terminus interacts with L11 and the large rRNA to form the base of the stalk. The C-terminus forms an elongated spine to which L12 dimers bind in a sequential fashion forming a multimeric L10(L12)X complex.

Its function is as follows. Forms part of the ribosomal stalk, playing a central role in the interaction of the ribosome with GTP-bound translation factors. This Buchnera aphidicola subsp. Cinara cedri (strain Cc) protein is Large ribosomal subunit protein uL10.